Here is a 276-residue protein sequence, read N- to C-terminus: Putative pyridoxine kinase (276 aa).

Asn-139 is a binding site for ATP. Glu-142 is a binding site for Mg(2+). Residues 176 to 180 (KGGKA), Asp-188, Gly-213, and Lys-238 each bind ATP.

Belongs to the ThiD family.

It catalyses the reaction pyridoxal + ATP = pyridoxal 5'-phosphate + ADP + H(+). In terms of biological role, phosphorylates B6 vitamers; functions in a salvage pathway. Uses pyridoxal, pyridoxine, and pyridoxamine as substrates. This chain is Putative pyridoxine kinase (pdxK), found in Staphylococcus epidermidis (strain ATCC 12228 / FDA PCI 1200).